Reading from the N-terminus, the 336-residue chain is 4-hydroxythreonine-4-phosphate dehydrogenase (336 aa).

Histidine 135 and threonine 136 together coordinate substrate. A divalent metal cation-binding residues include histidine 165, histidine 210, and histidine 265. Positions 273, 282, and 291 each coordinate substrate.

Belongs to the PdxA family. Homodimer. Zn(2+) is required as a cofactor. Requires Mg(2+) as cofactor. Co(2+) serves as cofactor.

It is found in the cytoplasm. It catalyses the reaction 4-(phosphooxy)-L-threonine + NAD(+) = 3-amino-2-oxopropyl phosphate + CO2 + NADH. It participates in cofactor biosynthesis; pyridoxine 5'-phosphate biosynthesis; pyridoxine 5'-phosphate from D-erythrose 4-phosphate: step 4/5. Functionally, catalyzes the NAD(P)-dependent oxidation of 4-(phosphooxy)-L-threonine (HTP) into 2-amino-3-oxo-4-(phosphooxy)butyric acid which spontaneously decarboxylates to form 3-amino-2-oxopropyl phosphate (AHAP). This is 4-hydroxythreonine-4-phosphate dehydrogenase from Marinobacter nauticus (strain ATCC 700491 / DSM 11845 / VT8) (Marinobacter aquaeolei).